We begin with the raw amino-acid sequence, 232 residues long: Glycerol-3-phosphate acyltransferase (232 aa).

The next 6 helical transmembrane spans lie at Phe-4–Gly-24, Val-56–Phe-76, Ile-90–Ala-110, Met-124–Val-144, Val-152–Phe-172, and Ser-191–His-211.

It belongs to the PlsY family. As to quaternary structure, probably interacts with PlsX.

It localises to the cell inner membrane. It carries out the reaction an acyl phosphate + sn-glycerol 3-phosphate = a 1-acyl-sn-glycero-3-phosphate + phosphate. The protein operates within lipid metabolism; phospholipid metabolism. Its function is as follows. Catalyzes the transfer of an acyl group from acyl-phosphate (acyl-PO(4)) to glycerol-3-phosphate (G3P) to form lysophosphatidic acid (LPA). This enzyme utilizes acyl-phosphate as fatty acyl donor, but not acyl-CoA or acyl-ACP. In Chlorobaculum tepidum (strain ATCC 49652 / DSM 12025 / NBRC 103806 / TLS) (Chlorobium tepidum), this protein is Glycerol-3-phosphate acyltransferase.